Consider the following 374-residue polypeptide: Queuine tRNA-ribosyltransferase (374 aa).

Aspartate 89 acts as the Proton acceptor in catalysis. Substrate contacts are provided by residues 89-93, aspartate 143, glutamine 185, and glycine 212; that span reads DSGGF. The RNA binding stretch occupies residues 243–249; it reads GVGKPED. Catalysis depends on aspartate 262, which acts as the Nucleophile. The tract at residues 267 to 271 is RNA binding; important for wobble base 34 recognition; that stretch reads TRNAR. Zn(2+) is bound by residues cysteine 300, cysteine 302, cysteine 305, and histidine 331.

Belongs to the queuine tRNA-ribosyltransferase family. As to quaternary structure, homodimer. Within each dimer, one monomer is responsible for RNA recognition and catalysis, while the other monomer binds to the replacement base PreQ1. Zn(2+) serves as cofactor.

It carries out the reaction 7-aminomethyl-7-carbaguanine + guanosine(34) in tRNA = 7-aminomethyl-7-carbaguanosine(34) in tRNA + guanine. It functions in the pathway tRNA modification; tRNA-queuosine biosynthesis. Functionally, catalyzes the base-exchange of a guanine (G) residue with the queuine precursor 7-aminomethyl-7-deazaguanine (PreQ1) at position 34 (anticodon wobble position) in tRNAs with GU(N) anticodons (tRNA-Asp, -Asn, -His and -Tyr). Catalysis occurs through a double-displacement mechanism. The nucleophile active site attacks the C1' of nucleotide 34 to detach the guanine base from the RNA, forming a covalent enzyme-RNA intermediate. The proton acceptor active site deprotonates the incoming PreQ1, allowing a nucleophilic attack on the C1' of the ribose to form the product. After dissociation, two additional enzymatic reactions on the tRNA convert PreQ1 to queuine (Q), resulting in the hypermodified nucleoside queuosine (7-(((4,5-cis-dihydroxy-2-cyclopenten-1-yl)amino)methyl)-7-deazaguanosine). The chain is Queuine tRNA-ribosyltransferase from Saccharophagus degradans (strain 2-40 / ATCC 43961 / DSM 17024).